The chain runs to 400 residues: Cytohesin-3 (400 aa).

Positions 14-61 (EDLSLEEREELLDIRRRKKELIDDIERLKYEIAEVMTEIDNLTSVEES) form a coiled coil. One can recognise an SEC7 domain in the interval 77–206 (FNMDPKKGIQ…IIMLNTSLHN (130 aa)). Residues 265-381 (PDREGWLLKL…WMKSIKASIS (117 aa)) form the PH domain. Residues 273–281 (KLGGGRVKT), Arg-285, Tyr-296, Arg-306, and Asn-355 each bind a 1,2-diacyl-sn-glycero-3-phospho-(1D-myo-inositol-3,4,5-trisphosphate). A C-terminal autoinhibitory region region spans residues 392-400 (RKRRIANKK).

In terms of assembly, interacts with TAMALIN. Present in all tissues tested, with highest protein levels in brain and adrenal.

The protein resides in the cytoplasm. It is found in the cytosol. The protein localises to the cell membrane. Promotes guanine-nucleotide exchange on ARF1. Promotes the activation of ARF factors through replacement of GDP with GTP. The sequence is that of Cytohesin-3 (Cyth3) from Rattus norvegicus (Rat).